The primary structure comprises 150 residues: Testis-expressed protein 22 (150 aa).

Positions 1–23 (MDSRKLSPRGKKLESHLSQEHRR) are enriched in basic and acidic residues. The tract at residues 1-26 (MDSRKLSPRGKKLESHLSQEHRRPPL) is disordered.

It is found in the cytoplasm. Its subcellular location is the cytoplasmic vesicle. The protein localises to the secretory vesicle. It localises to the acrosome. In Homo sapiens (Human), this protein is Testis-expressed protein 22 (TEX22).